The primary structure comprises 235 residues: MELATELKEGILLIDKPQGRTSFSLIRTLTKLIGVKKIGHAGTLDPFATGVMVMLIGRRFTRLSDVLLFEDKEYAAVAHLGTTTDSYDCDGKIVGRSKKIPTYEEILEASQYFQGEIQQIPPMFSAKKVNGKKLYEYARKGLSIERRQSTVQVSLQITKYEYPLLHFSIQCSKGTYIRSIAHELGNMLGCGAYLEELRRLRSGSFSIDQCIDGCLLDCPDFDISPYLRDFNGNML.

The active-site Nucleophile is D45.

Belongs to the pseudouridine synthase TruB family. Type 1 subfamily.

The enzyme catalyses uridine(55) in tRNA = pseudouridine(55) in tRNA. Its function is as follows. Responsible for synthesis of pseudouridine from uracil-55 in the psi GC loop of transfer RNAs. The polypeptide is tRNA pseudouridine synthase B (Chlamydia abortus (strain DSM 27085 / S26/3) (Chlamydophila abortus)).